The following is a 493-amino-acid chain: Cobyric acid synthase (493 aa).

Residues 261-455 (HTRIAVVAYP…LHGLFEDAAV (195 aa)) enclose the GATase cobBQ-type domain. Cys-342 functions as the Nucleophile in the catalytic mechanism. Residue His-447 is part of the active site.

Belongs to the CobB/CobQ family. CobQ subfamily.

It participates in cofactor biosynthesis; adenosylcobalamin biosynthesis. In terms of biological role, catalyzes amidations at positions B, D, E, and G on adenosylcobyrinic A,C-diamide. NH(2) groups are provided by glutamine, and one molecule of ATP is hydrogenolyzed for each amidation. In Acidovorax sp. (strain JS42), this protein is Cobyric acid synthase.